A 260-amino-acid chain; its full sequence is Glutathione S-transferase domain-containing protein DDB_G0274223 (260 aa).

Residues 7–96 form the GST N-terminal domain; sequence KVDYIFYTNN…YLAQKYNTFL (90 aa). The GST C-terminal domain maps to 102-233; that stretch reads NPHENSDVIT…GFKTFNPSAL (132 aa).

This sequence belongs to the GST superfamily.

The protein is Glutathione S-transferase domain-containing protein DDB_G0274223 of Dictyostelium discoideum (Social amoeba).